Reading from the N-terminus, the 372-residue chain is MVKFNNIVYDPQLTDKKFPVKASDPEREAKLVVLQPVGYPFVCNLMESPRIDAVNKELFEIYARDQWEGFSATEGSYLFDQKLLPDYAFKIIRAHPDGSKITRNTSIILLENEREEFHEVKSDITMDDVIGQEDAKIKCRIIMRYLEDPDRFRDWAPRNVLFHGSPGTGKTMLAKSLANELRVPLYLIKATSLIGEHVGDGARQIHELYELASKTAPSVIFIDEMDAIGLDRRFQSLRGDVSEVVNALLTEMDGINQNWGVVTIGATNNPELLDNAIRSRFEEEIEFKLPGDDERRMMLEKYIETMPLDVDFSVDKLVKLTKGMSGRDIKERVLKTALHRALADESPRVEREHIEYALKERDLKSEPRHMFA.

Residue glycine 164–threonine 171 coordinates ATP.

The protein belongs to the AAA ATPase family.

Its function is as follows. The 26S proteasome is involved in the ATP-dependent degradation of ubiquitinated proteins. The regulatory (or ATPase) complex confers ATP dependency and substrate specificity to the 26S complex. This Methanothermobacter marburgensis (strain ATCC BAA-927 / DSM 2133 / JCM 14651 / NBRC 100331 / OCM 82 / Marburg) (Methanobacterium thermoautotrophicum) protein is Putative 26S proteasome regulatory subunit homolog MTBMA_c13930.